Consider the following 352-residue polypeptide: Aliphatic aldoxime dehydratase (352 aa).

Ser-219 is an an aliphatic aldoxime binding site. His-299 provides a ligand contact to heme b. His-320 serves as a coordination point for an aliphatic aldoxime. His-320 is a catalytic residue.

It belongs to the heme-containing dehydratase family. In terms of assembly, homodimer. It depends on heme b as a cofactor. Ca(2+) serves as cofactor.

The catalysed reaction is an aliphatic aldoxime = a nitrile + H2O. Active when the heme iron is in the ferrous state. Is very sensitive to AgNO(3), is also inhibited by hydroxylamine and phenylhydrazine, and hardly inhibited by thiol reagents. Not sensitive to chelating agents and serine-modifying reagents. Catalyzes the dehydration of aldoximes to their corresponding nitrile. Aliphatic aldoximes are more effective substrates than aromatic aldoximes. Shows high activity with butyraldoxime and acetaldoxime, but only weak activity with the aromatic aldoxime pyridine-2-aldoxime. Cannot use benzaldoxime, isonitrosoacetophenone and pyridine-4-aldoxime. Is involved in the metabolism of aldoxime in vivo. The protein is Aliphatic aldoxime dehydratase of Pseudomonas chlororaphis (Pseudomonas aureofaciens).